A 30-amino-acid chain; its full sequence is U5-ctenitoxin-Pk1b (30 aa).

Cystine bridges form between C6-C23 and C13-C29.

The protein belongs to the neurotoxin 04 (omega-agtx) family. 02 (Tx1) subfamily. As to expression, expressed by the venom gland.

The protein resides in the secreted. Its function is as follows. Lethal neurotoxin. Causes spastic paralysis and death in mice in 4-6 minutes after intracerebroventricular injection at dose levels of 1.5 ug per mouse. The chain is U5-ctenitoxin-Pk1b from Phoneutria keyserlingi (Brazilian wandering spider).